Reading from the N-terminus, the 847-residue chain is Glucans biosynthesis glucosyltransferase H (847 aa).

The Cytoplasmic portion of the chain corresponds to 1-138 (MNKTTEYIDA…KWRTVGTIRR (138 aa)). The helical transmembrane segment at 139 to 156 (YILLILTLAQTVVATWYM) threads the bilayer. Residues 157 to 193 (KTILPYQGWALINPMDMVGQDVWVSFMQLLPYMLQTG) are Periplasmic-facing. Residues 194-216 (ILILFAVLFCWVSAGFWTALMGF) form a helical membrane-spanning segment. The Cytoplasmic portion of the chain corresponds to 217 to 511 (LQLLIGRDKY…LVKGMHPVHR (295 aa)). The chain crosses the membrane as a helical span at residues 512 to 534 (AVFLTGVMSYLSAPLWFMFLALS). At 535 to 567 (TALQVVHALTEPQYFLQPRQLFPVWPQWRPELA) the chain is on the periplasmic side. A helical membrane pass occupies residues 568 to 590 (IALFASTMVLLFLPKLLSILLIW). The Cytoplasmic segment spans residues 591-602 (CKGTKEYGGFWR). A helical membrane pass occupies residues 603 to 625 (VTLSLLLEVLFSVLLAPVRMLFH). Topologically, residues 626 to 679 (TVFVVSAFLGWEVVWNSPQRDDDSTSWGEAFKRHGSQLLLGLVWAVGMAWLDLR) are periplasmic. The helical transmembrane segment at 680 to 702 (FLFWLAPIVFSLILSPFVSVISS) threads the bilayer. Over 703–847 (RATVGLRTKR…ALRKPDAASQ (145 aa)) the chain is Cytoplasmic.

Belongs to the glycosyltransferase 2 family. OpgH subfamily.

The protein resides in the cell inner membrane. It participates in glycan metabolism; osmoregulated periplasmic glucan (OPG) biosynthesis. Involved in the biosynthesis of osmoregulated periplasmic glucans (OPGs). The polypeptide is Glucans biosynthesis glucosyltransferase H (Escherichia coli O6:H1 (strain CFT073 / ATCC 700928 / UPEC)).